A 39-amino-acid chain; its full sequence is MVNTGRVPLWLVGLVGGFAVITIVSLFIYGSYSGLGSSL.

The chain crosses the membrane as a helical span at residues 9-29 (LWLVGLVGGFAVITIVSLFIY).

It belongs to the PsbJ family. PSII is composed of 1 copy each of membrane proteins PsbA, PsbB, PsbC, PsbD, PsbE, PsbF, PsbH, PsbI, PsbJ, PsbK, PsbL, PsbM, PsbT, PsbX, PsbY, PsbZ, Psb30/Ycf12, at least 3 peripheral proteins of the oxygen-evolving complex and a large number of cofactors. It forms dimeric complexes.

Its subcellular location is the plastid. The protein resides in the chloroplast thylakoid membrane. Functionally, one of the components of the core complex of photosystem II (PSII). PSII is a light-driven water:plastoquinone oxidoreductase that uses light energy to abstract electrons from H(2)O, generating O(2) and a proton gradient subsequently used for ATP formation. It consists of a core antenna complex that captures photons, and an electron transfer chain that converts photonic excitation into a charge separation. The polypeptide is Photosystem II reaction center protein J (Thalassiosira pseudonana (Marine diatom)).